Here is a 335-residue protein sequence, read N- to C-terminus: Cathepsin B-like cysteine proteinase 4 (335 aa).

A signal peptide spans 1–15 (MKYLILAALVAVTAG). Positions 16–80 (LVIPLVPKTQ…VVKHDINEDT (65 aa)) are excised as a propeptide. 6 cysteine pairs are disulfide-bonded: cysteine 94/cysteine 123, cysteine 106/cysteine 150, cysteine 142/cysteine 209, cysteine 143/cysteine 146, cysteine 179/cysteine 213, and cysteine 187/cysteine 199. Residue cysteine 109 is part of the active site. N-linked (GlcNAc...) asparagine glycosylation occurs at asparagine 193. Active-site residues include histidine 281 and asparagine 301.

It belongs to the peptidase C1 family.

The protein localises to the secreted. Its function is as follows. Thiol protease which shows activity against the fluorogenic substrate z-Arg-Arg-AMC. The polypeptide is Cathepsin B-like cysteine proteinase 4 (cpr-4) (Caenorhabditis elegans).